The following is a 78-amino-acid chain: Acyl carrier protein (78 aa).

The Carrier domain occupies 2-77; the sequence is STIEERVKKI…AAIDYVKAHQ (76 aa). Ser-37 bears the O-(pantetheine 4'-phosphoryl)serine mark.

Belongs to the acyl carrier protein (ACP) family. In terms of processing, 4'-phosphopantetheine is transferred from CoA to a specific serine of apo-ACP by AcpS. This modification is essential for activity because fatty acids are bound in thioester linkage to the sulfhydryl of the prosthetic group.

Its subcellular location is the cytoplasm. Its pathway is lipid metabolism; fatty acid biosynthesis. In terms of biological role, carrier of the growing fatty acid chain in fatty acid biosynthesis. The polypeptide is Acyl carrier protein (Pseudomonas putida (strain ATCC 47054 / DSM 6125 / CFBP 8728 / NCIMB 11950 / KT2440)).